The sequence spans 243 residues: Lipid II isoglutaminyl synthase (glutamine-hydrolyzing) subunit GatD (243 aa).

Residues 6-197 (IYHFMSDKLN…LHGPILPKNY (192 aa)) form the GATase cobBQ-type domain. Cys-94 functions as the Nucleophile in the catalytic mechanism. Arg-128 serves as a coordination point for substrate. His-189 is an active-site residue.

The protein belongs to the CobB/CobQ family. GatD subfamily. As to quaternary structure, forms a heterodimer with MurT.

The enzyme catalyses beta-D-GlcNAc-(1-&gt;4)-Mur2Ac(oyl-L-Ala-gamma-D-Glu-L-Lys-D-Ala-D-Ala)-di-trans,octa-cis-undecaprenyl diphosphate + L-glutamine + ATP + H2O = beta-D-GlcNAc-(1-&gt;4)-Mur2Ac(oyl-L-Ala-D-isoglutaminyl-L-Lys-D-Ala-D-Ala)-di-trans,octa-cis-undecaprenyl diphosphate + L-glutamate + ADP + phosphate + H(+). The catalysed reaction is L-glutamine + H2O = L-glutamate + NH4(+). It functions in the pathway cell wall biogenesis; peptidoglycan biosynthesis. In terms of biological role, the lipid II isoglutaminyl synthase complex catalyzes the formation of alpha-D-isoglutamine in the cell wall lipid II stem peptide. The GatD subunit catalyzes the hydrolysis of glutamine to glutamate and ammonia. The resulting ammonia molecule is channeled to the active site of MurT. The polypeptide is Lipid II isoglutaminyl synthase (glutamine-hydrolyzing) subunit GatD (Staphylococcus aureus (strain N315)).